The primary structure comprises 177 residues: Large ribosomal subunit protein uL10 (177 aa).

This sequence belongs to the universal ribosomal protein uL10 family. As to quaternary structure, part of the ribosomal stalk of the 50S ribosomal subunit. The N-terminus interacts with L11 and the large rRNA to form the base of the stalk. The C-terminus forms an elongated spine to which L12 dimers bind in a sequential fashion forming a multimeric L10(L12)X complex.

Functionally, forms part of the ribosomal stalk, playing a central role in the interaction of the ribosome with GTP-bound translation factors. This Xanthomonas oryzae pv. oryzae (strain MAFF 311018) protein is Large ribosomal subunit protein uL10.